Reading from the N-terminus, the 81-residue chain is Cortexin-3 (81 aa).

The helical transmembrane segment at 29–49 (MTFVFVILLFIFLGILIVRCF) threads the bilayer.

It belongs to the cortexin family.

The protein resides in the membrane. The protein is Cortexin-3 (CTXN3) of Homo sapiens (Human).